The primary structure comprises 308 residues: Taste receptor type 2 member 41 (308 aa).

Residues Met1–Ser6 lie on the Extracellular side of the membrane. Residues Val7–Ile27 traverse the membrane as a helical segment. Residues Val28–Cys60 are Cytoplasmic-facing. Residues Val61–Ala81 traverse the membrane as a helical segment. Residues Arg82–Asp90 are Extracellular-facing. The chain crosses the membrane as a helical span at residues Phe91 to Ile111. Topologically, residues Ala112 to Ala128 are cytoplasmic. A helical transmembrane segment spans residues Leu129–Phe149. Residues Trp150 to Pro184 are Extracellular-facing. Asn152 and Asn167 each carry an N-linked (GlcNAc...) asparagine glycan. The chain crosses the membrane as a helical span at residues Leu185–Ile205. At Asn206–Ser239 the chain is on the cytoplasmic side. Residues Phe240–Ser260 form a helical membrane-spanning segment. The Extracellular segment spans residues Ser261 to Val264. The helical transmembrane segment at Trp265–Ile285 threads the bilayer. Topologically, residues Thr286–Thr308 are cytoplasmic.

The protein belongs to the G-protein coupled receptor T2R family. Expressed in subsets of taste receptor cells of the tongue and palate epithelium and exclusively in gustducin-positive cells. Expressed in 15% taste bud cells in circumvallate and foliate papillae but only in 2% in fungiform papillae. Expressed in the duodenum, antrum and fundus (part of the stomach).

The protein localises to the membrane. Receptor that may play a role in the perception of bitterness and is gustducin-linked. May play a role in sensing the chemical composition of the gastrointestinal content. The activity of this receptor may stimulate alpha gustducin, mediate PLC-beta-2 activation and lead to the gating of TRPM5. This Rattus norvegicus (Rat) protein is Taste receptor type 2 member 41 (Tas2r41).